The primary structure comprises 324 residues: HTH-type transcriptional regulator CysB (324 aa).

The region spanning Met-1–Val-59 is the HTH lysR-type domain. A DNA-binding region (H-T-H motif) is located at residues Val-19–Arg-38.

Belongs to the LysR transcriptional regulatory family. Homotetramer.

The protein localises to the cytoplasm. Functionally, this protein is a positive regulator of gene expression for the cysteine regulon. The inducer for CysB is N-acetylserine. This Escherichia coli O157:H7 protein is HTH-type transcriptional regulator CysB (cysB).